The sequence spans 327 residues: Phenylalanine--tRNA ligase alpha subunit (327 aa).

Glu252 contributes to the Mg(2+) binding site.

The protein belongs to the class-II aminoacyl-tRNA synthetase family. Phe-tRNA synthetase alpha subunit type 1 subfamily. Tetramer of two alpha and two beta subunits. Requires Mg(2+) as cofactor.

It localises to the cytoplasm. It carries out the reaction tRNA(Phe) + L-phenylalanine + ATP = L-phenylalanyl-tRNA(Phe) + AMP + diphosphate + H(+). The sequence is that of Phenylalanine--tRNA ligase alpha subunit from Aliivibrio fischeri (strain ATCC 700601 / ES114) (Vibrio fischeri).